The following is a 1052-amino-acid chain: SE-cephalotoxin (1052 aa).

Positions 1-21 (MMGTSRCVILLFALLLWAANA) are cleaved as a signal peptide. The propeptide occupies 22 to 29 (APPEIHTT). Residue asparagine 41 is glycosylated (N-linked (GlcNAc...) asparagine). Residues 130–194 (TGVNRKLDQI…DMNKRRLMAE (65 aa)) adopt a coiled-coil conformation. The N-linked (GlcNAc...) asparagine glycan is linked to asparagine 353. The EGF-like domain maps to 460–497 (PGNPCNHGCNGHGECKVVPYTDQFQCFCHGNYEGKMCQ). 3 cysteine pairs are disulfide-bonded: cysteine 464/cysteine 474, cysteine 468/cysteine 485, and cysteine 487/cysteine 496. N-linked (GlcNAc...) asparagine glycosylation is found at asparagine 576 and asparagine 715. Residues 709-769 (TSCPPLNVTH…QWSATPKCES (61 aa)) form the Sushi domain. Intrachain disulfides connect cysteine 711–cysteine 752, cysteine 739–cysteine 767, cysteine 780–cysteine 814, cysteine 784–cysteine 820, cysteine 795–cysteine 804, cysteine 829–cysteine 847, and cysteine 841–cysteine 858. The TSP type-1 domain occupies 768-821 (ESSWSRWSKWSACASTCGNATQSRRRRCLGQSESEKCIGPSKQVRKCFVEDCCQ). A glycan (N-linked (GlcNAc...) asparagine) is linked at asparagine 786. The LDL-receptor class A domain occupies 819 to 859 (CCQEKYGKFKCDNNKCISLSRVCDGNDDCRNAEDESKSRCK).

As to quaternary structure, monomer. In terms of tissue distribution, expressed by the salivary gland.

The protein localises to the secreted. The protein is SE-cephalotoxin of Acanthosepion esculentum (Golden cuttlefish).